A 534-amino-acid chain; its full sequence is EH domain-containing protein 1 (534 aa).

At Met-1 the chain carries N-acetylmethionine. The Dynamin-type G domain occupies 55 to 286 (FDNKPMVLLV…DLFKDIQSLP (232 aa)). Positions 65 to 72 (GQYSTGKT) are G1 motif. 65-72 (GQYSTGKT) serves as a coordination point for ATP. Residues 91–92 (EP) form a G2 motif region. A G3 motif region spans residues 153–156 (DTPG). Positions 198–227 (DEFSEVIKALKNHEDKIRVVLNKADQIETQ) form a coiled coil. The segment at 219–222 (NKAD) is G4 motif. Lys-220 lines the ATP pocket. Ile-243 is a region of interest (G5 motif). Trp-258 contributes to the ATP binding site. Residues 444 to 532 (DKPTYDEIFY…PHLVPPSKRR (89 aa)) enclose the EH domain. Position 456 is a phosphoserine (Ser-456). One can recognise an EF-hand domain in the interval 476–511 (LPNTVLGKIWKLADVDRDGLLDDEEFALANHLIKVK). Asp-489, Asp-491, Asp-493, and Glu-500 together coordinate Ca(2+).

It belongs to the TRAFAC class dynamin-like GTPase superfamily. Dynamin/Fzo/YdjA family. EHD subfamily. In terms of assembly, homooligomer, and heterooligomer with EHD2, EHD3 and EHD4, ATP-binding is required for heterooligomerization. Interacts (via EH domain) with MICALL1 (via NPF1 motif); the interaction is direct and recruits EHD1 to membranes. Interacts with RAB35; the interaction is indirect through MICALL1 and recruits EHD1 to membranes. Interacts (via EH domain) with PACSIN2 (via NPF motifs); regulates localization to tubular recycling endosome membranes. Interacts with PACSIN1. Interacts with RAB8A. Interacts with FER1L5 (via second C2 domain). Interacts with MYOF. Interacts with ZFYVE20. Interacts (via EH domain) with RAB11FIP2.

The protein localises to the recycling endosome membrane. Its subcellular location is the early endosome membrane. The protein resides in the cell membrane. It is found in the cell projection. It localises to the cilium membrane. ATP- and membrane-binding protein that controls membrane reorganization/tubulation upon ATP hydrolysis. Acts in early endocytic membrane fusion and membrane trafficking of recycling endosomes. Recruited to endosomal membranes upon nerve growth factor stimulation, indirectly regulates neurite outgrowth. Plays a role in myoblast fusion. Involved in the unidirectional retrograde dendritic transport of endocytosed BACE1 and in efficient sorting of BACE1 to axons implicating a function in neuronal APP processing. Plays a role in the formation of the ciliary vesicle (CV), an early step in cilium biogenesis. Proposed to be required for the fusion of distal appendage vesicles (DAVs) to form the CV by recruiting SNARE complex component SNAP29. Is required for recruitment of transition zone proteins CEP290, RPGRIP1L, TMEM67 and B9D2, and of IFT20 following DAV reorganization before Rab8-dependent ciliary membrane extension. Required for the loss of CCP110 form the mother centriole essential for the maturation of the basal body during ciliogenesis. This is EH domain-containing protein 1 from Bos taurus (Bovine).